Here is a 202-residue protein sequence, read N- to C-terminus: MENLIIYAFIYLLGSISFGLILTKFFAKTDIKKEGSRSIGATNVLRVVKEKNPKLAKKLAIATIILDFAKAAIPLLILKFLHYDQALLWSVAVLAIFGHCFSIYLLFEGGKGIATGAGAMIVLLPLEVLTAFIVWAVTGKIFKISSLASLAALLAFIVSSFIFNYDLEIHTHAPVFIIAFIIVYKHLPNIKRLIFKEECKVI.

6 consecutive transmembrane segments (helical) span residues 3–23, 61–81, 87–107, 117–137, 144–164, and 167–187; these read NLIIYAFIYLLGSISFGLILT, IATIILDFAKAAIPLLILKFL, LLWSVAVLAIFGHCFSIYLLF, AGAMIVLLPLEVLTAFIVWAV, ISSLASLAALLAFIVSSFIFN, and LEIHTHAPVFIIAFIIVYKHL.

This sequence belongs to the PlsY family. Probably interacts with PlsX.

It localises to the cell inner membrane. The enzyme catalyses an acyl phosphate + sn-glycerol 3-phosphate = a 1-acyl-sn-glycero-3-phosphate + phosphate. It participates in lipid metabolism; phospholipid metabolism. Its function is as follows. Catalyzes the transfer of an acyl group from acyl-phosphate (acyl-PO(4)) to glycerol-3-phosphate (G3P) to form lysophosphatidic acid (LPA). This enzyme utilizes acyl-phosphate as fatty acyl donor, but not acyl-CoA or acyl-ACP. This chain is Glycerol-3-phosphate acyltransferase, found in Campylobacter jejuni subsp. doylei (strain ATCC BAA-1458 / RM4099 / 269.97).